Here is a 662-residue protein sequence, read N- to C-terminus: UvrABC system protein B (662 aa).

The Helicase ATP-binding domain maps to 25 to 412 (EGIEKGLKMQ…SQKIVEQIIR (388 aa)). 38–45 (GVTGSGKT) contributes to the ATP binding site. The Beta-hairpin motif lies at 91–114 (YYDYYQPEAYLPATDTYIEKDSAI). In terms of domain architecture, Helicase C-terminal spans 429–595 (QVDDLYGEIK…TVQKAVRDVI (167 aa)). Residues 622 to 657 (KQYVEKLTREMKEAAKALEFEKAAMLRDLIIELRAQ) form the UVR domain.

The protein belongs to the UvrB family. Forms a heterotetramer with UvrA during the search for lesions. Interacts with UvrC in an incision complex.

It localises to the cytoplasm. The UvrABC repair system catalyzes the recognition and processing of DNA lesions. A damage recognition complex composed of 2 UvrA and 2 UvrB subunits scans DNA for abnormalities. Upon binding of the UvrA(2)B(2) complex to a putative damaged site, the DNA wraps around one UvrB monomer. DNA wrap is dependent on ATP binding by UvrB and probably causes local melting of the DNA helix, facilitating insertion of UvrB beta-hairpin between the DNA strands. Then UvrB probes one DNA strand for the presence of a lesion. If a lesion is found the UvrA subunits dissociate and the UvrB-DNA preincision complex is formed. This complex is subsequently bound by UvrC and the second UvrB is released. If no lesion is found, the DNA wraps around the other UvrB subunit that will check the other stand for damage. This Carboxydothermus hydrogenoformans (strain ATCC BAA-161 / DSM 6008 / Z-2901) protein is UvrABC system protein B.